The primary structure comprises 289 residues: uncharacterized protein (289 aa).

The next 9 membrane-spanning stretches (helical) occupy residues 4–24 (NLLA…GTVV), 44–64 (LNAL…LAYF), 68–88 (VALG…SLMF), 106–126 (IFWA…GRPL), 138–158 (IPVL…AEYV), 166–186 (ILGL…KAAV), 196–216 (GLIL…GTIV), 230–250 (LPAM…LVLG), and 258–278 (WEWI…IALS).

Its subcellular location is the cell membrane. This is an uncharacterized protein from Corynebacterium glutamicum (strain ATCC 13032 / DSM 20300 / JCM 1318 / BCRC 11384 / CCUG 27702 / LMG 3730 / NBRC 12168 / NCIMB 10025 / NRRL B-2784 / 534).